A 142-amino-acid polypeptide reads, in one-letter code: Hemoglobin subunit alpha-1/2 (142 aa).

The region spanning 2–142 is the Globin domain; that stretch reads VLSPADKTNI…VSTVLTSKYR (141 aa). The residue at position 4 (Ser-4) is a Phosphoserine. The residue at position 8 (Lys-8) is an N6-succinyllysine. The residue at position 9 (Thr-9) is a Phosphothreonine. Lys-12 is subject to N6-succinyllysine. Position 17 is an N6-acetyllysine; alternate (Lys-17). Lys-17 carries the post-translational modification N6-succinyllysine; alternate. A Phosphotyrosine modification is found at Tyr-25. An N6-succinyllysine modification is found at Lys-41. His-59 serves as a coordination point for O2. His-88 lines the heme b pocket. Ser-103 carries the post-translational modification Phosphoserine. The residue at position 109 (Thr-109) is a Phosphothreonine. Ser-125 carries the post-translational modification Phosphoserine. A phosphothreonine mark is found at Thr-135 and Thr-138. A Phosphoserine modification is found at Ser-139.

This sequence belongs to the globin family. Heterotetramer of two alpha chains and two beta chains. Red blood cells.

Its function is as follows. Involved in oxygen transport from the lung to the various peripheral tissues. The polypeptide is Hemoglobin subunit alpha-1/2 (Oryctolagus cuniculus (Rabbit)).